Here is a 701-residue protein sequence, read N- to C-terminus: Polyribonucleotide nucleotidyltransferase (701 aa).

Mg(2+) is bound by residues Asp-487 and Asp-493. The region spanning 554–613 (PTMIAMKIDTDKIRDVIGKGGATIRAICEETKASIDIEDDGSIKIFGESKEAAEAARQRV) is the KH domain. The region spanning 623-691 (GKIYVGKVER…NRGRIKLSIK (69 aa)) is the S1 motif domain.

The protein belongs to the polyribonucleotide nucleotidyltransferase family. As to quaternary structure, component of the RNA degradosome, which is a multiprotein complex involved in RNA processing and mRNA degradation. Mg(2+) is required as a cofactor.

Its subcellular location is the cytoplasm. It carries out the reaction RNA(n+1) + phosphate = RNA(n) + a ribonucleoside 5'-diphosphate. Functionally, involved in mRNA degradation. Catalyzes the phosphorolysis of single-stranded polyribonucleotides processively in the 3'- to 5'-direction. This Pseudomonas savastanoi pv. phaseolicola (strain 1448A / Race 6) (Pseudomonas syringae pv. phaseolicola (strain 1448A / Race 6)) protein is Polyribonucleotide nucleotidyltransferase.